The chain runs to 380 residues: Phospho-N-acetylmuramoyl-pentapeptide-transferase (380 aa).

The next 11 helical transmembrane spans lie at 26-46, 75-95, 98-118, 135-155, 161-181, 183-203, 222-242, 259-279, 283-303, 311-331, and 357-377; these read IVAA…IFIE, MGGA…ADLA, FVWA…TDDW, LVLQ…DWRF, FPWV…FVPS, LFNP…VIAT, VVSA…IAGF, LGVF…YNTY, VFMG…MAVL, AILH…VWSF, and KIIV…LLSI.

The protein belongs to the glycosyltransferase 4 family. MraY subfamily. Mg(2+) is required as a cofactor.

Its subcellular location is the cell inner membrane. The enzyme catalyses UDP-N-acetyl-alpha-D-muramoyl-L-alanyl-gamma-D-glutamyl-meso-2,6-diaminopimeloyl-D-alanyl-D-alanine + di-trans,octa-cis-undecaprenyl phosphate = di-trans,octa-cis-undecaprenyl diphospho-N-acetyl-alpha-D-muramoyl-L-alanyl-D-glutamyl-meso-2,6-diaminopimeloyl-D-alanyl-D-alanine + UMP. The protein operates within cell wall biogenesis; peptidoglycan biosynthesis. Its function is as follows. Catalyzes the initial step of the lipid cycle reactions in the biosynthesis of the cell wall peptidoglycan: transfers peptidoglycan precursor phospho-MurNAc-pentapeptide from UDP-MurNAc-pentapeptide onto the lipid carrier undecaprenyl phosphate, yielding undecaprenyl-pyrophosphoryl-MurNAc-pentapeptide, known as lipid I. The protein is Phospho-N-acetylmuramoyl-pentapeptide-transferase of Anaeromyxobacter dehalogenans (strain 2CP-1 / ATCC BAA-258).